The chain runs to 145 residues: Small ribosomal subunit protein uS9 (145 aa).

The span at 1 to 13 (MATDQHSNKSNVS) shows a compositional bias: polar residues. Positions 1–24 (MATDQHSNKSNVSAARKPLSPSPT) are disordered.

Belongs to the universal ribosomal protein uS9 family.

It localises to the cytoplasm. The protein is Small ribosomal subunit protein uS9 (RPS16) of Lupinus polyphyllus (Large-leaved lupine).